The following is a 1179-amino-acid chain: RecBCD enzyme subunit RecB (1179 aa).

Residues methionine 1–tyrosine 859 are DNA-binding and helicase activity, interacts with RecC. The 442-residue stretch at asparagine 18–serine 459 folds into the UvrD-like helicase ATP-binding domain. Alanine 39 to threonine 46 contacts ATP. A UvrD-like helicase C-terminal domain is found at glutamate 485–glycine 755. A nuclease activity, interacts with RecD and RecA region spans residues tyrosine 910–lysine 1179. 3 residues coordinate Mg(2+): histidine 962, aspartate 1073, and aspartate 1086. Aspartate 1086 (for nuclease activity) is an active-site residue.

The protein belongs to the helicase family. UvrD subfamily. In terms of assembly, heterotrimer of RecB, RecC and RecD. All subunits contribute to DNA-binding. Interacts with RecA. The cofactor is Mg(2+).

It catalyses the reaction Exonucleolytic cleavage (in the presence of ATP) in either 5'- to 3'- or 3'- to 5'-direction to yield 5'-phosphooligonucleotides.. The enzyme catalyses Couples ATP hydrolysis with the unwinding of duplex DNA by translocating in the 3'-5' direction.. It carries out the reaction ATP + H2O = ADP + phosphate + H(+). A helicase/nuclease that prepares dsDNA breaks (DSB) for recombinational DNA repair. Binds to DSBs and unwinds DNA via a highly rapid and processive ATP-dependent bidirectional helicase activity. Unwinds dsDNA until it encounters a Chi (crossover hotspot instigator) sequence from the 3' direction. Cuts ssDNA a few nucleotides 3' to the Chi site. The properties and activities of the enzyme are changed at Chi. The Chi-altered holoenzyme produces a long 3'-ssDNA overhang and facilitates RecA-binding to the ssDNA for homologous DNA recombination and repair. Holoenzyme degrades any linearized DNA that is unable to undergo homologous recombination. In the holoenzyme this subunit contributes ATPase, 3'-5' helicase, exonuclease activity and loads RecA onto ssDNA. The chain is RecBCD enzyme subunit RecB from Buchnera aphidicola subsp. Schizaphis graminum (strain Sg).